The sequence spans 304 residues: Olfactory receptor 8G2 (304 aa).

Over 1–41 (MVFLSSVETDQRKMSAGNHSSVTEFILAGLSEQPELQLRLF) the chain is Extracellular. An N-linked (GlcNAc...) asparagine glycan is attached at N18. The helical transmembrane segment at 42–62 (LLFLGIYVVTVVGNLSMITLI) threads the bilayer. The Cytoplasmic portion of the chain corresponds to 63-69 (GLSSHLH). The chain crosses the membrane as a helical span at residues 70-90 (TPMYYFLSGLSFIDLCHSTII). Over 91–110 (TPKMLVNFVTEKNIISYPEC) the chain is Extracellular. C110 and C192 are disulfide-bonded. A helical membrane pass occupies residues 111–130 (MTQLYFFLIFAIAECHMLAV). Topologically, residues 131-154 (TAYDRYVAICSPLLYNVIMSYHHC) are cytoplasmic. Residues 155–175 (FWLTVGVYVLGILGSTIHTGF) traverse the membrane as a helical segment. Over 176-193 (MLRLFLCKTNVINHYFCD) the chain is Extracellular. Residues 194 to 214 (LFPLLGLSCSSTYINELLVLV) form a helical membrane-spanning segment. Residues 215 to 217 (LSA) lie on the Cytoplasmic side of the membrane. Residues 218–238 (FNILTPALTILASYIFIIASI) form a helical membrane-spanning segment. The Extracellular segment spans residues 239–257 (LRIRSTEGRSKAFSTCSSH). Residues 258–278 (ILAVAVFFGSAAFMYLQPSSV) form a helical membrane-spanning segment. Residues 279–304 (SSMDQRKVSSVFYTTIVPMLNPQSIA) are Cytoplasmic-facing.

The protein belongs to the G-protein coupled receptor 1 family.

The protein resides in the cell membrane. In terms of biological role, odorant receptor. The sequence is that of Olfactory receptor 8G2 from Homo sapiens (Human).